Consider the following 165-residue polypeptide: Xanthine-guanine phosphoribosyltransferase (165 aa).

Residues 41 to 42 and 98 to 106 contribute to the 5-phospho-alpha-D-ribose 1-diphosphate site; these read RG and DDLTDTGKT. Asp99 provides a ligand contact to Mg(2+). Guanine contacts are provided by Asp102 and Ile145. Residues Asp102 and Ile145 each coordinate xanthine. GMP contacts are provided by residues 102 to 106 and 144 to 145; these read DTGKT and WI.

It belongs to the purine/pyrimidine phosphoribosyltransferase family. XGPT subfamily. In terms of assembly, homotetramer. Mg(2+) serves as cofactor.

The protein resides in the cell inner membrane. The catalysed reaction is GMP + diphosphate = guanine + 5-phospho-alpha-D-ribose 1-diphosphate. It carries out the reaction XMP + diphosphate = xanthine + 5-phospho-alpha-D-ribose 1-diphosphate. It catalyses the reaction IMP + diphosphate = hypoxanthine + 5-phospho-alpha-D-ribose 1-diphosphate. The protein operates within purine metabolism; GMP biosynthesis via salvage pathway; GMP from guanine: step 1/1. It participates in purine metabolism; XMP biosynthesis via salvage pathway; XMP from xanthine: step 1/1. Purine salvage pathway enzyme that catalyzes the transfer of the ribosyl-5-phosphate group from 5-phospho-alpha-D-ribose 1-diphosphate (PRPP) to the N9 position of the 6-oxopurines guanine and xanthine to form the corresponding ribonucleotides GMP (guanosine 5'-monophosphate) and XMP (xanthosine 5'-monophosphate), with the release of PPi. To a lesser extent, also acts on hypoxanthine. This Chelativorans sp. (strain BNC1) protein is Xanthine-guanine phosphoribosyltransferase.